The following is a 121-amino-acid chain: Replication protein A 14 kDa subunit (121 aa).

V2 carries the post-translational modification N-acetylvaline. Residues K23, K39, and K88 each participate in a glycyl lysine isopeptide (Lys-Gly) (interchain with G-Cter in ubiquitin) cross-link.

This sequence belongs to the replication factor A protein 3 family. As to quaternary structure, component of the canonical replication protein A complex (RPA), a heterotrimer composed of RPA1, RPA2 and RPA3. Also a component of the aRPA, the alternative replication protein A complex, a trimeric complex similar to the replication protein A complex/RPA but where RPA1 and RPA3 are associated with RPA4 instead of RPA2. Interacts with BRIP1/FANCJ via the RPA1 subunit; following DNA damage they colocalize in foci in the nucleus. Post-translationally, ubiquitinated by RFWD3 at stalled replication forks in response to DNA damage: ubiquitination by RFWD3 does not lead to degradation by the proteasome and promotes removal of the RPA complex from stalled replication forks, promoting homologous recombination.

It is found in the nucleus. As part of the heterotrimeric replication protein A complex (RPA/RP-A), binds and stabilizes single-stranded DNA intermediates that form during DNA replication or upon DNA stress. It prevents their reannealing and in parallel, recruits and activates different proteins and complexes involved in DNA metabolism. Thereby, it plays an essential role both in DNA replication and the cellular response to DNA damage. In the cellular response to DNA damage, the RPA complex controls DNA repair and DNA damage checkpoint activation. Through recruitment of ATRIP activates the ATR kinase a master regulator of the DNA damage response. It is required for the recruitment of the DNA double-strand break repair factors RAD51 and RAD52 to chromatin, in response to DNA damage. Also recruits to sites of DNA damage proteins like XPA and XPG that are involved in nucleotide excision repair and is required for this mechanism of DNA repair. Also plays a role in base excision repair (BER), probably through interaction with UNG. RPA stimulates 5'-3' helicase activity of BRIP1/FANCJ. Also recruits SMARCAL1/HARP, which is involved in replication fork restart, to sites of DNA damage. May also play a role in telomere maintenance. RPA3 has its own single-stranded DNA-binding activity and may be responsible for polarity of the binding of the complex to DNA. As part of the alternative replication protein A complex, aRPA, binds single-stranded DNA and probably plays a role in DNA repair. Compared to the RPA2-containing, canonical RPA complex, may not support chromosomal DNA replication and cell cycle progression through S-phase. The aRPA may not promote efficient priming by DNA polymerase alpha but could support DNA synthesis by polymerase delta in presence of PCNA and replication factor C (RFC), the dual incision/excision reaction of nucleotide excision repair and RAD51-dependent strand exchange. The polypeptide is Replication protein A 14 kDa subunit (RPA3) (Homo sapiens (Human)).